The following is a 983-amino-acid chain: Bifunctional glutamine synthetase adenylyltransferase/adenylyl-removing enzyme (983 aa).

Residues 1–490 (MDRKSSVTID…AHGQVFYSPV (490 aa)) are adenylyl removase. Residues 496-983 (RIPTQDLRMS…RVVDAVFWNQ (488 aa)) are adenylyl transferase.

It belongs to the GlnE family. Requires Mg(2+) as cofactor.

It carries out the reaction [glutamine synthetase]-O(4)-(5'-adenylyl)-L-tyrosine + phosphate = [glutamine synthetase]-L-tyrosine + ADP. The enzyme catalyses [glutamine synthetase]-L-tyrosine + ATP = [glutamine synthetase]-O(4)-(5'-adenylyl)-L-tyrosine + diphosphate. Functionally, involved in the regulation of glutamine synthetase GlnA, a key enzyme in the process to assimilate ammonia. When cellular nitrogen levels are high, the C-terminal adenylyl transferase (AT) inactivates GlnA by covalent transfer of an adenylyl group from ATP to specific tyrosine residue of GlnA, thus reducing its activity. Conversely, when nitrogen levels are low, the N-terminal adenylyl removase (AR) activates GlnA by removing the adenylyl group by phosphorolysis, increasing its activity. The regulatory region of GlnE binds the signal transduction protein PII (GlnB) which indicates the nitrogen status of the cell. The protein is Bifunctional glutamine synthetase adenylyltransferase/adenylyl-removing enzyme of Cutibacterium acnes (strain DSM 16379 / KPA171202) (Propionibacterium acnes).